Reading from the N-terminus, the 230-residue chain is Urease accessory protein UreE (230 aa).

Basic and acidic residues-rich tracts occupy residues 182-193 (HVHVDSPLDEPH) and 204-230 (SHGDGHSHSHSHDHDHDHRHDDHDHKH). The segment at 182–230 (HVHVDSPLDEPHGSGLHVHAIHSHGDGHSHSHSHDHDHDHRHDDHDHKH) is disordered.

Belongs to the UreE family.

The protein localises to the cytoplasm. Its function is as follows. Involved in urease metallocenter assembly. Binds nickel. Probably functions as a nickel donor during metallocenter assembly. The chain is Urease accessory protein UreE from Yersinia mollaretii.